A 179-amino-acid polypeptide reads, in one-letter code: Large ribosomal subunit protein uL10 (179 aa).

A binds L7/L12 dimers region spans residues 137–179 (KEELYAMLVGRVKAPITGLVFALSGILRNLVYVLNAIKEKKSE).

In terms of assembly, part of the ribosomal stalk of the 50S ribosomal subunit. The N-terminus interacts with L11 and 23S rRNA to form the base of the stalk. The C-terminus forms an elongated spine to which 3 L12 dimers bind in a sequential fashion forming a heptameric L10(L12)2(L12)2(L12)2 complex.

Its function is as follows. Forms part of the ribosomal stalk, playing a central role in the interaction of the ribosome with GTP-bound translation factors (such as IF-2, EF-Tu, EF-G and RF3). This Thermotoga maritima (strain ATCC 43589 / DSM 3109 / JCM 10099 / NBRC 100826 / MSB8) protein is Large ribosomal subunit protein uL10 (rplJ).